A 364-amino-acid polypeptide reads, in one-letter code: Endopolygalacturonase B (364 aa).

The N-terminal stretch at 1-20 (MHFLQNSLIAAAMGAALVAA) is a signal peptide. Residues 21–29 (APAADLDAR) constitute a propeptide that is removed on maturation. Cys32 and Cys47 are joined by a disulfide. The N-linked (GlcNAc...) asparagine glycan is linked to Asn138. PbH1 repeat units follow at residues 159–188 (SDHL…DIGS), 189–210 (STYI…AINS), 211–231 (GEHI…SIGS), 240–261 (VKSV…RIKT), 269–291 (VTDV…IVEQ), and 303–348 (TNGV…DITG). Catalysis depends on Asp203, which acts as the Proton donor. The cysteines at positions 205 and 221 are disulfide-linked. Residue His225 is part of the active site. Cystine bridges form between Cys331/Cys336 and Cys355/Cys364.

The protein belongs to the glycosyl hydrolase 28 family.

The protein localises to the secreted. The enzyme catalyses (1,4-alpha-D-galacturonosyl)n+m + H2O = (1,4-alpha-D-galacturonosyl)n + (1,4-alpha-D-galacturonosyl)m.. Involved in maceration and soft-rotting of plant tissue. Hydrolyzes the 1,4-alpha glycosidic bonds of de-esterified pectate in the smooth region of the plant cell wall. The sequence is that of Endopolygalacturonase B (pgaB) from Emericella nidulans (strain FGSC A4 / ATCC 38163 / CBS 112.46 / NRRL 194 / M139) (Aspergillus nidulans).